The following is a 383-amino-acid chain: Outer membrane protein assembly factor BamB (383 aa).

The signal sequence occupies residues methionine 1–alanine 23. Cysteine 24 carries N-palmitoyl cysteine lipidation. Cysteine 24 is lipidated: S-diacylglycerol cysteine.

Belongs to the BamB family. In terms of assembly, part of the Bam complex.

It localises to the cell outer membrane. Functionally, part of the outer membrane protein assembly complex, which is involved in assembly and insertion of beta-barrel proteins into the outer membrane. The chain is Outer membrane protein assembly factor BamB from Alkalilimnicola ehrlichii (strain ATCC BAA-1101 / DSM 17681 / MLHE-1).